The chain runs to 189 residues: Ras-like protein 1 (189 aa).

Residue G10–S17 coordinates GTP. The short motif at Y32–Y40 is the Effector region element. GTP contacts are provided by residues D57–Q61 and N116–D119. Residue C186 is modified to Cysteine methyl ester. C186 is lipidated: S-geranylgeranyl cysteine. The propeptide at K187–L189 is removed in mature form.

The protein belongs to the small GTPase superfamily. Ras family.

The protein resides in the cell membrane. The enzyme catalyses GTP + H2O = GDP + phosphate + H(+). Its activity is regulated as follows. Alternates between an inactive form bound to GDP and an active form bound to GTP. Activated by a guanine nucleotide-exchange factor (GEF) and inactivated by a GTPase-activating protein (GAP). In terms of biological role, ras proteins bind GDP/GTP and possess intrinsic GTPase activity. Plays a role in eye development by regulating cell growth, survival of postmitotic ommatidial cells and differentiation of photoreceptor cells. During larval development, mediates Ptth/tor signaling leading to the production of ecdysone, a hormone required for the initiation of metamorphosis. The polypeptide is Ras-like protein 1 (Drosophila virilis (Fruit fly)).